The following is a 1049-amino-acid chain: Protein phosphatase Slingshot homolog 1 (1049 aa).

Over residues 1 to 12 (MALVTLQRSPTP) the composition is skewed to polar residues. A disordered region spans residues 1-28 (MALVTLQRSPTPSAASSSASNSELEAGS). A2 carries the post-translational modification N-acetylalanine. A compositionally biased stretch (low complexity) spans 13–25 (SAASSSASNSELE). 2 positions are modified to phosphoserine: S37 and S57. The DEK-C domain maps to 249 to 304 (ERTERLIKAKLRSIMMSQDLENVTSKEIRNELEKQMNCNLKELKEFIDNEMLLILG). Residues 308 to 449 (KPSLIFDHLY…LSEYEGILDA (142 aa)) form the Tyrosine-protein phosphatase domain. The active-site Phosphocysteine intermediate is C393. The segment at 456 to 499 (KLWRQQTDSSLQQPVDDPAGPGDFLPETPDGTPESQLPFLDDAA) is disordered. Residues 458 to 468 (WRQQTDSSLQQ) show a composition bias toward polar residues. S515 is modified (phosphoserine). Disordered regions lie at residues 544–603 (AAPP…RWGQ), 693–787 (HLAS…KPAK), 825–899 (HTKE…KSPP), and 923–955 (PTSS…KQRT). The span at 564–573 (CEKDVKKKLE) shows a compositional bias: basic and acidic residues. Position 576 is a phosphoserine (S576). The span at 731–742 (GAALEPPASLLE) shows a compositional bias: low complexity. Over residues 772–787 (VIKEESSPKKDMKPAK) the composition is skewed to basic and acidic residues. S897 is subject to Phosphoserine. Residues 897–1049 (SPPPFFYRLD…LKSPSWMSKS (153 aa)) are interaction with YWHAG. Residues 925–943 (SSSMSSNLTRSSSSDSIHS) show a composition bias toward low complexity. S978 is modified (phosphoserine). The tract at residues 989–1049 (TEDLSSEADP…LKSPSWMSKS (61 aa)) is disordered. Positions 1001-1013 (VADSQDTTLSESS) are enriched in polar residues.

The protein belongs to the protein-tyrosine phosphatase family. In terms of assembly, interacts with actin and this stimulates phosphatase activity. Also interacts with LIMK1 and with the 14-3-3 proteins YWHAB, YWHAG, YWHAQ, and YWHAZ. Interaction with 14-3-3 proteins inhibits phosphatase activity and also blocks recruitment to lamellipodia and stimulation by actin. Post-translationally, phosphorylated. Inhibitory phosphorylation by PAK4 promotes binding to YWHAZ. Phosphorylation at Ser-978 is decreased by stimuli which promote actin reorganization and lamellipodia formation. Can be dephosphorylated and activated by PPP3CA/calcineurin A. Phosphorylation decreases immediately prior to telophase.

The protein resides in the cytoplasm. The protein localises to the cytoskeleton. It localises to the cell projection. Its subcellular location is the lamellipodium. It is found in the cleavage furrow. The protein resides in the midbody. The enzyme catalyses O-phospho-L-tyrosyl-[protein] + H2O = L-tyrosyl-[protein] + phosphate. The catalysed reaction is O-phospho-L-seryl-[protein] + H2O = L-seryl-[protein] + phosphate. It carries out the reaction O-phospho-L-threonyl-[protein] + H2O = L-threonyl-[protein] + phosphate. Functionally, protein phosphatase which regulates actin filament dynamics. Dephosphorylates and activates the actin binding/depolymerizing factor cofilin, which subsequently binds to actin filaments and stimulates their disassembly. Inhibitory phosphorylation of cofilin is mediated by LIMK1, which may also be dephosphorylated and inactivated by this protein. In Homo sapiens (Human), this protein is Protein phosphatase Slingshot homolog 1.